The primary structure comprises 172 residues: Crossover junction endodeoxyribonuclease RuvC (172 aa).

Active-site residues include D12, E71, and D143. The Mg(2+) site is built by D12, E71, and D143.

Belongs to the RuvC family. In terms of assembly, homodimer which binds Holliday junction (HJ) DNA. The HJ becomes 2-fold symmetrical on binding to RuvC with unstacked arms; it has a different conformation from HJ DNA in complex with RuvA. In the full resolvosome a probable DNA-RuvA(4)-RuvB(12)-RuvC(2) complex forms which resolves the HJ. Requires Mg(2+) as cofactor.

It is found in the cytoplasm. It carries out the reaction Endonucleolytic cleavage at a junction such as a reciprocal single-stranded crossover between two homologous DNA duplexes (Holliday junction).. Functionally, the RuvA-RuvB-RuvC complex processes Holliday junction (HJ) DNA during genetic recombination and DNA repair. Endonuclease that resolves HJ intermediates. Cleaves cruciform DNA by making single-stranded nicks across the HJ at symmetrical positions within the homologous arms, yielding a 5'-phosphate and a 3'-hydroxyl group; requires a central core of homology in the junction. The consensus cleavage sequence is 5'-(A/T)TT(C/G)-3'. Cleavage occurs on the 3'-side of the TT dinucleotide at the point of strand exchange. HJ branch migration catalyzed by RuvA-RuvB allows RuvC to scan DNA until it finds its consensus sequence, where it cleaves and resolves the cruciform DNA. This Coxiella burnetii (strain CbuK_Q154) (Coxiella burnetii (strain Q154)) protein is Crossover junction endodeoxyribonuclease RuvC.